We begin with the raw amino-acid sequence, 300 residues long: D-alanine--D-alanine ligase (300 aa).

Residues 99 to 293 enclose the ATP-grasp domain; the sequence is KKILKYANIN…FAELLNSIVK (195 aa). An ATP-binding site is contributed by 126 to 181; that stretch reads IEKIGYPVFVKPNSGGSSVATNLVKNKEGIKEAVELALKYDKEVMIENYTKGEEIT. Mg(2+)-binding residues include Asp248, Glu260, and Asn262.

It belongs to the D-alanine--D-alanine ligase family. Requires Mg(2+) as cofactor. It depends on Mn(2+) as a cofactor.

The protein resides in the cytoplasm. The enzyme catalyses 2 D-alanine + ATP = D-alanyl-D-alanine + ADP + phosphate + H(+). The protein operates within cell wall biogenesis; peptidoglycan biosynthesis. In terms of biological role, cell wall formation. The polypeptide is D-alanine--D-alanine ligase (Clostridium botulinum (strain Loch Maree / Type A3)).